The following is a 328-amino-acid chain: Cytochrome f (328 aa).

An N-terminal signal peptide occupies residues 1–44 (MRTPDFSAIWQASKQLTARIILLAFATFALYVFHDLAFPQGAAA). Heme-binding residues include Tyr-45, Cys-66, Cys-69, and His-70. The helical transmembrane segment at 294-314 (IKGLMVFLAGIMLAQILLVIK) threads the bilayer.

It belongs to the cytochrome f family. The 4 large subunits of the cytochrome b6-f complex are cytochrome b6, subunit IV (17 kDa polypeptide, PetD), cytochrome f and the Rieske protein, while the 4 small subunits are PetG, PetL, PetM and PetN. The complex functions as a dimer. The cofactor is heme.

The protein resides in the cellular thylakoid membrane. Component of the cytochrome b6-f complex, which mediates electron transfer between photosystem II (PSII) and photosystem I (PSI), cyclic electron flow around PSI, and state transitions. The polypeptide is Cytochrome f (Rippkaea orientalis (strain PCC 8801 / RF-1) (Cyanothece sp. (strain PCC 8801))).